A 296-amino-acid chain; its full sequence is Protoheme IX farnesyltransferase (296 aa).

9 helical membrane passes run I27–H47, P48–L68, A98–N118, V120–L140, I148–G168, L175–L195, H219–A239, V242–L262, and C274–L294.

This sequence belongs to the UbiA prenyltransferase family. Protoheme IX farnesyltransferase subfamily.

It is found in the cell inner membrane. The catalysed reaction is heme b + (2E,6E)-farnesyl diphosphate + H2O = Fe(II)-heme o + diphosphate. Its pathway is porphyrin-containing compound metabolism; heme O biosynthesis; heme O from protoheme: step 1/1. In terms of biological role, converts heme B (protoheme IX) to heme O by substitution of the vinyl group on carbon 2 of heme B porphyrin ring with a hydroxyethyl farnesyl side group. This is Protoheme IX farnesyltransferase from Anaplasma phagocytophilum (strain HZ).